Reading from the N-terminus, the 1257-residue chain is Phosphatidylinositol 3,4,5-trisphosphate 5-phosphatase 2 (1257 aa).

The region spanning 21-117 is the SH2 domain; sequence WYHRDLSRAA…GLVCALLLPV (97 aa). Positions 119–132 are enriched in basic and acidic residues; it reads GEREPDPPDDRDAS. The segment at 119-181 is disordered; that stretch reads GEREPDPPDD…ESTPNGLSTV (63 aa). Phosphoserine is present on serine 132. The span at 156-166 shows a compositional bias: pro residues; sequence PSSPLPAPETP. The residue at position 165 (threonine 165) is a Phosphothreonine. Phosphoserine occurs at positions 241 and 353. A Phosphotyrosine modification is found at tyrosine 887. Serine 891 is subject to Phosphoserine. Residues 897-986 are disordered; sequence TGAKSKAPSV…PPKNSFNNPA (90 aa). Residues 939-951 are compositionally biased toward pro residues; sequence PPPTGRPPAPPRA. Residues 945 to 950 carry the SH3-binding motif; sequence PPAPPR. The span at 952-966 shows a compositional bias: basic and acidic residues; the sequence is VPREESLNPRLKSEG. The NPXY motif signature appears at 984–987; the sequence is NPAY. At tyrosine 987 the chain carries Phosphotyrosine. The tract at residues 1004–1115 is disordered; sequence SFARAPIPPT…PASTFLEEVA (112 aa). 2 stretches are compositionally biased toward pro residues: residues 1049-1060 and 1088-1104; these read LPPPDFPPPPLP and GPPPPKAHPRPPLPPGT. Serine 1132 bears the Phosphoserine mark. 2 positions are modified to phosphotyrosine: tyrosine 1136 and tyrosine 1161. The SAM domain occupies 1195–1257; the sequence is LGEAGMGAWL…LLLDTLQLSK (63 aa). A Phosphoserine modification is found at serine 1256.

Belongs to the inositol 1,4,5-trisphosphate 5-phosphatase family. In terms of assembly, interacts with tyrosine phosphorylated form of SHC1. Interacts with EGFR. Upon stimulation by the EGF signaling pathway, it forms a complex with SHC1 and EGFR. Interacts with cytoskeletal protein SORBS3/vinexin, promoting its localization to the periphery of cells. Forms a complex with filamin (FLNA or FLNB), actin, GPIb (GP1BA or GP1BB) that regulates cortical and submembraneous actin. Interacts with c-Met/MET, when c-Met/MET is phosphorylated on 'Tyr-1356'. Interacts with p130Cas/BCAR1. Interacts with CENTD3/ARAP3 via its SAM domain. Interacts with c-Cbl/CBL and CAP/SORBS1. Interacts with activated EPHA2 receptor. Interacts with receptors FCGR2A. Interacts with FCGR2B. Interacts with tyrosine kinase ABL1. Interacts with tyrosine kinase TEC. Interacts with CSF1R. Interacts (via N-terminus) with SH3YL1 (via SH3 domain). Interacts (via SH2 domain) with tyrosine phosphorylated KLRC1 (via ITIM). Interacts with NEDD9/HEF1. Post-translationally, tyrosine phosphorylated by the members of the SRC family after exposure to a diverse array of extracellular stimuli such as insulin, growth factors such as EGF or PDGF, chemokines, integrin ligands and hypertonic and oxidative stress. May be phosphorylated upon IgG receptor FCGR2B-binding. Phosphorylated at Tyr-987 following cell attachment and spreading. Phosphorylated at Tyr-1161 following EGF signaling pathway stimulation.

It is found in the cytoplasm. The protein localises to the cytosol. Its subcellular location is the cytoskeleton. It localises to the membrane. The protein resides in the cell projection. It is found in the filopodium. The protein localises to the lamellipodium. Its subcellular location is the basal cell membrane. It localises to the nucleus. The protein resides in the nucleus speckle. It is found in the spindle pole. It carries out the reaction a 1,2-diacyl-sn-glycero-3-phospho-(1D-myo-inositol-3,4,5-trisphosphate) + H2O = a 1,2-diacyl-sn-glycero-3-phospho-(1D-myo-inositol-3,4-bisphosphate) + phosphate. It catalyses the reaction 1,2-dioctanoyl-sn-glycero-3-phospho-(1D-myo-inositol-3,4,5-trisphosphate) + H2O = 1,2-dioctanoyl-sn-glycero-3-phospho-(1D-myo-inositol-3,4-bisphosphate) + phosphate. The enzyme catalyses 1,2-dihexadecanoyl-sn-glycero-3-phospho-(1D-myo-inositol-3,4,5-trisphosphate) + H2O = 1,2-dihexadecanoyl-sn-glycero-3-phospho-(1D-myo-inositol-3,4-bisphosphate) + phosphate. Its activity is regulated as follows. Activated upon translocation to the sites of synthesis of PtdIns(3,4,5)P3 in the membrane. Enzymatic activity is enhanced in the presence of phosphatidylserine. Functionally, phosphatidylinositol (PtdIns) phosphatase that specifically hydrolyzes the 5-phosphate of phosphatidylinositol-3,4,5-trisphosphate (PtdIns(3,4,5)P3) to produce PtdIns(3,4)P2, thereby negatively regulating the PI3K (phosphoinositide 3-kinase) pathways. Required for correct mitotic spindle orientation and therefore progression of mitosis. Plays a central role in regulation of PI3K-dependent insulin signaling, although the precise molecular mechanisms and signaling pathways remain unclear. While overexpression reduces both insulin-stimulated MAP kinase and Akt activation, its absence does not affect insulin signaling or GLUT4 trafficking. Confers resistance to dietary obesity. May act by regulating AKT2, but not AKT1, phosphorylation at the plasma membrane. Part of a signaling pathway that regulates actin cytoskeleton remodeling. Required for the maintenance and dynamic remodeling of actin structures as well as in endocytosis, having a major impact on ligand-induced EGFR internalization and degradation. Participates in regulation of cortical and submembraneous actin by hydrolyzing PtdIns(3,4,5)P3 thereby regulating membrane ruffling. Regulates cell adhesion and cell spreading. Required for HGF-mediated lamellipodium formation, cell scattering and spreading. Acts as a negative regulator of EPHA2 receptor endocytosis by inhibiting via PI3K-dependent Rac1 activation. Acts as a regulator of neuritogenesis by regulating PtdIns(3,4,5)P3 level and is required to form an initial protrusive pattern, and later, maintain proper neurite outgrowth. Acts as a negative regulator of the FC-gamma-RIIA receptor (FCGR2A). Mediates signaling from the FC-gamma-RIIB receptor (FCGR2B), playing a central role in terminating signal transduction from activating immune/hematopoietic cell receptor systems. Involved in EGF signaling pathway. Upon stimulation by EGF, it is recruited by EGFR and dephosphorylates PtdIns(3,4,5)P3. Plays a negative role in regulating the PI3K-PKB pathway, possibly by inhibiting PKB activity. Down-regulates Fc-gamma-R-mediated phagocytosis in macrophages independently of INPP5D/SHIP1. In macrophages, down-regulates NF-kappa-B-dependent gene transcription by regulating macrophage colony-stimulating factor (M-CSF)-induced signaling. Plays a role in the localization of AURKA and NEDD9/HEF1 to the basolateral membrane at interphase in polarized cysts, thereby mediates cell cycle homeostasis, cell polarization and cilia assembly. Additionally promotion of cilia growth is also facilitated by hydrolysis of (PtdIns(3,4,5)P3) to PtdIns(3,4)P2. Promotes formation of apical membrane-initiation sites during the initial stages of lumen formation via Rho family-induced actin filament organization and CTNNB1 localization to cell-cell contacts. May also hydrolyze PtdIns(1,3,4,5)P4, and could thus affect the levels of the higher inositol polyphosphates like InsP6. Involved in endochondral ossification. The sequence is that of Phosphatidylinositol 3,4,5-trisphosphate 5-phosphatase 2 from Rattus norvegicus (Rat).